The following is a 152-amino-acid chain: 3-hydroxyacyl-[acyl-carrier-protein] dehydratase FabZ (152 aa).

His-54 is a catalytic residue.

The protein belongs to the thioester dehydratase family. FabZ subfamily.

The protein resides in the cytoplasm. It catalyses the reaction a (3R)-hydroxyacyl-[ACP] = a (2E)-enoyl-[ACP] + H2O. In terms of biological role, involved in unsaturated fatty acids biosynthesis. Catalyzes the dehydration of short chain beta-hydroxyacyl-ACPs and long chain saturated and unsaturated beta-hydroxyacyl-ACPs. This chain is 3-hydroxyacyl-[acyl-carrier-protein] dehydratase FabZ, found in Roseobacter denitrificans (strain ATCC 33942 / OCh 114) (Erythrobacter sp. (strain OCh 114)).